The sequence spans 372 residues: NADH-quinone oxidoreductase subunit D (372 aa).

It belongs to the complex I 49 kDa subunit family. In terms of assembly, NDH-1 is composed of 14 different subunits. Subunits NuoB, C, D, E, F, and G constitute the peripheral sector of the complex.

The protein resides in the cell inner membrane. The enzyme catalyses a quinone + NADH + 5 H(+)(in) = a quinol + NAD(+) + 4 H(+)(out). Its function is as follows. NDH-1 shuttles electrons from NADH, via FMN and iron-sulfur (Fe-S) centers, to quinones in the respiratory chain. The immediate electron acceptor for the enzyme in this species is believed to be ubiquinone. Couples the redox reaction to proton translocation (for every two electrons transferred, four hydrogen ions are translocated across the cytoplasmic membrane), and thus conserves the redox energy in a proton gradient. The chain is NADH-quinone oxidoreductase subunit D from Desulfotalea psychrophila (strain LSv54 / DSM 12343).